A 189-amino-acid polypeptide reads, in one-letter code: Segregation and condensation protein B (189 aa).

This sequence belongs to the ScpB family. Homodimer. Homodimerization may be required to stabilize the binding of ScpA to the Smc head domains. Component of a cohesin-like complex composed of ScpA, ScpB and the Smc homodimer, in which ScpA and ScpB bind to the head domain of Smc. The presence of the three proteins is required for the association of the complex with DNA.

Its subcellular location is the cytoplasm. Its function is as follows. Participates in chromosomal partition during cell division. May act via the formation of a condensin-like complex containing Smc and ScpA that pull DNA away from mid-cell into both cell halves. The polypeptide is Segregation and condensation protein B (Streptococcus pneumoniae serotype 19F (strain G54)).